Here is a 356-residue protein sequence, read N- to C-terminus: GTPase HflX (356 aa).

Residues 180–356 form the Hflx-type G domain; the sequence is PSIGIVGYTN…KIYQLATQLS (177 aa). GTP-binding positions include 186–193, 211–215, 232–235, 300–303, and 334–336; these read GYTNSGKT, FTTMS, DTVG, NKID, and SAL. Residues T193 and T213 each coordinate Mg(2+).

The protein belongs to the TRAFAC class OBG-HflX-like GTPase superfamily. HflX GTPase family. Monomer. Associates with the 50S ribosomal subunit. Does not associate with 70S ribosomes. Requires Mg(2+) as cofactor.

It is found in the cytoplasm. With respect to regulation, GTPase activity is stimulated by the presence of 50S ribosomal subunits. Hydrolysis is probably regulated by the HflX N-terminal domain. In terms of biological role, GTPase that associates with the 50S ribosomal subunit and may have a role during protein synthesis or ribosome biogenesis. Specific for GTP. This Saccharolobus solfataricus (strain ATCC 35092 / DSM 1617 / JCM 11322 / P2) (Sulfolobus solfataricus) protein is GTPase HflX.